The chain runs to 749 residues: Phosphate-regulating neutral endopeptidase PHEX (749 aa).

Topologically, residues 1-20 (MEAETGSSVETGKKANRGTR) are cytoplasmic. A helical; Signal-anchor for type II membrane protein transmembrane segment spans residues 21-41 (IALVVFVGGTLVLGTILFLVS). The Extracellular portion of the chain corresponds to 42–641 (QGLLSLQAKQ…LNVKGKRTLG (600 aa)). Residues 53–749 (YCLKPECIEA…NRGMDSCRLW (697 aa)) enclose the Peptidase M13 domain. A disulfide bond links Cys54 and Cys59. Asn71, Asn238, Asn263, Asn290, Asn301, Asn377, and Asn484 each carry an N-linked (GlcNAc...) asparagine glycan. 4 cysteine pairs are disulfide-bonded: Cys77–Cys733, Cys85–Cys693, Cys142–Cys406, and Cys617–Cys746. His580 contributes to the Zn(2+) binding site. The active site involves Glu581. Residues His584 and Glu642 each contribute to the Zn(2+) site. Catalysis depends on Asp646, which acts as the Proton donor. The N-linked (GlcNAc...) asparagine glycan is linked to Asn736.

The protein belongs to the peptidase M13 family. In terms of assembly, interacts with MEPE; the interaction is zinc-dependent (via ASARM motif). The cofactor is Zn(2+). In terms of tissue distribution, specifically expressed in ovary. Expressed at low levels in kidney.

The protein localises to the cell membrane. In terms of biological role, peptidase that cleaves SIBLING (small integrin-binding ligand, N-linked glycoprotein)-derived ASARM peptides, thus regulating their biological activity. Cleaves ASARM peptides between Ser and Glu or Asp residues. Regulates osteogenic cell differentiation and bone mineralization through the cleavage of the MEPE-derived ASARM peptide. Promotes dentin mineralization and renal phosphate reabsorption by cleaving DMP1- and MEPE-derived ASARM peptides. Inhibits the cleavage of MEPE by CTSB/cathepsin B thus preventing MEPE degradation. In Homo sapiens (Human), this protein is Phosphate-regulating neutral endopeptidase PHEX (PHEX).